We begin with the raw amino-acid sequence, 438 residues long: Rhomboid-related protein 1 (438 aa).

The disordered stretch occupies residues 1 to 62 (MGRVEDGGTT…PSQPGPALWS (62 aa)). Positions 8-17 (GTTEELEDWD) are enriched in acidic residues. 7 helical membrane-spanning segments follow: residues 196–216 (PPVFMASVTLAQIIVFLCYGA), 262–282 (GFNALLQLMIGVPLEMVHGLL), 284–304 (ISLLYLAGVLAGSLTVSITDM), 308–328 (VVGGSGGVYALCSAHLANVVM), 340–359 (LRMVLALVCMSSEVGRAVWL), 372–392 (PSFMAHLAGAVVGVSMGLTIL), and 405–425 (WWVVLLAYGTFLLFAVFWNVF). Residue S312 is the Nucleophile of the active site. The active site involves H377.

It belongs to the peptidase S54 family. As to expression, detected in heart, brain, skeletal muscle and kidney.

The protein localises to the membrane. The catalysed reaction is Cleaves type-1 transmembrane domains using a catalytic dyad composed of serine and histidine that are contributed by different transmembrane domains.. Its function is as follows. May be involved in regulated intramembrane proteolysis and the subsequent release of functional polypeptides from their membrane anchors. In Homo sapiens (Human), this protein is Rhomboid-related protein 1 (RHBDL1).